We begin with the raw amino-acid sequence, 31 residues long: Dermaseptin-7.1TR (31 aa).

Glutamine 31 carries the post-translational modification Glutamine amide.

In terms of tissue distribution, expressed by the skin glands.

Its subcellular location is the secreted. Its function is as follows. Has antimicrobial activity. The sequence is that of Dermaseptin-7.1TR from Phyllomedusa trinitatis (Trinidad leaf frog).